A 355-amino-acid chain; its full sequence is UDP-glucose 4-epimerase uge1 (355 aa).

8-39 (TVLVTGGAGYIGSHTCVVLLEKGYDVVIVDNL) serves as a coordination point for NAD(+).

It belongs to the NAD(P)-dependent epimerase/dehydratase family. The cofactor is NAD(+).

It carries out the reaction UDP-alpha-D-glucose = UDP-alpha-D-galactose. The protein operates within carbohydrate metabolism; galactose metabolism. Its function is as follows. Major UDP-glucose/-galactose 4-epimerase under glucose-rich conditions involved in protein galactosylation. This is UDP-glucose 4-epimerase uge1 (uge1) from Schizosaccharomyces pombe (strain 972 / ATCC 24843) (Fission yeast).